Consider the following 872-residue polypeptide: Paramyosin (872 aa).

Residues 1 to 31 (MSLYRSPSAALLKSPSQAAFGAPFGSMSVAD) are nonhelical region. The stretch at 32–851 (LGSLTRLEDK…ESSLHLIRAK (820 aa)) forms a coiled coil. Residues 294–376 (EITQWKSKFD…ALLERAREQL (83 aa)) form an interaction with unc-89 region. The tract at residues 856–866 (VVTGKSSSKIF) is nonhelical region.

It belongs to the paramyosin family. In terms of assembly, homodimer. May interact with unc-89 (via SH3 domain). In terms of processing, phosphorylated on serine residues in the N-terminal non-helical region. As to expression, expressed in body wall muscles of larvae and adults (at protein level). Expressed in gonadal myoepithelial sheath cells (at protein level).

The protein resides in the cytoplasm. The protein localises to the myofibril. Its subcellular location is the sarcomere. It localises to the a band. Structural component of the muscle thick filaments which is involved in assembly and organization of sarcomere myofilaments. Involved in ovulation. Plays a role in the formation of muscle connections, also called muscle arm extensions, between the body wall and the motor axons in the dorsal and ventral cord. The sequence is that of Paramyosin (unc-15) from Caenorhabditis elegans.